A 441-amino-acid chain; its full sequence is Trigger factor (441 aa).

The 86-residue stretch at 175–260 folds into the PPIase FKBP-type domain; it reads GDKVVIDYNS…LVSIMVPKDV (86 aa).

Belongs to the FKBP-type PPIase family. Tig subfamily.

It localises to the cytoplasm. It carries out the reaction [protein]-peptidylproline (omega=180) = [protein]-peptidylproline (omega=0). Functionally, involved in protein export. Acts as a chaperone by maintaining the newly synthesized protein in an open conformation. Functions as a peptidyl-prolyl cis-trans isomerase. The chain is Trigger factor from Anaplasma marginale (strain St. Maries).